The primary structure comprises 417 residues: Creatine kinase U-type, mitochondrial (417 aa).

The transit peptide at 1 to 39 (MAGPFSRLLSARPGLRLLALAGAGSLAAGFLLRPEPVRA) directs the protein to the mitochondrion. A cardiolipin-binding region spans residues 40 to 64 (ASERRRLYPPSAEYPDLRKHNNCMA). The 87-residue stretch at 45-131 (RLYPPSAEYP…FDPVIQERHN (87 aa)) folds into the Phosphagen kinase N-terminal domain. A Phosphoserine modification is found at serine 151. Residues 158–400 (YVLSSRVRTG…NYLIDCERRL (243 aa)) form the Phosphagen kinase C-terminal domain. 161 to 165 (SSRVR) contributes to the ATP binding site. A Phosphoserine modification is found at serine 196. The residue at position 213 (threonine 213) is a Phosphothreonine. Residue histidine 224 participates in ATP binding. Serine 232 is subject to Phosphoserine. Residues arginine 269, arginine 325, 353 to 358 (RGTGGV), and aspartate 368 contribute to the ATP site. The residue at position 355 (threonine 355) is a Phosphothreonine.

This sequence belongs to the ATP:guanido phosphotransferase family. As to quaternary structure, exists as an octamer composed of four MTCK homodimers.

The protein localises to the mitochondrion inner membrane. It carries out the reaction creatine + ATP = N-phosphocreatine + ADP + H(+). Reversibly catalyzes the transfer of phosphate between ATP and various phosphogens (e.g. creatine phosphate). Creatine kinase isoenzymes play a central role in energy transduction in tissues with large, fluctuating energy demands, such as skeletal muscle, heart, brain and spermatozoa. The protein is Creatine kinase U-type, mitochondrial (CKMT1A) of Homo sapiens (Human).